Consider the following 396-residue polypeptide: Acetate kinase (396 aa).

Mg(2+) is bound at residue Asn8. Lys15 is a binding site for ATP. Arg89 serves as a coordination point for substrate. Asp146 serves as the catalytic Proton donor/acceptor. ATP-binding positions include 206–210 (HIGNG), 283–285 (DMR), and 331–335 (GVGEN). Glu383 provides a ligand contact to Mg(2+).

It belongs to the acetokinase family. Homodimer. Requires Mg(2+) as cofactor. Mn(2+) is required as a cofactor.

It is found in the cytoplasm. It carries out the reaction acetate + ATP = acetyl phosphate + ADP. The protein operates within metabolic intermediate biosynthesis; acetyl-CoA biosynthesis; acetyl-CoA from acetate: step 1/2. Functionally, catalyzes the formation of acetyl phosphate from acetate and ATP. Can also catalyze the reverse reaction. This is Acetate kinase from Streptococcus pneumoniae (strain 70585).